The chain runs to 89 residues: Small ribosomal subunit protein uS15 (89 aa).

Belongs to the universal ribosomal protein uS15 family. In terms of assembly, part of the 30S ribosomal subunit. Forms a bridge to the 50S subunit in the 70S ribosome, contacting the 23S rRNA.

One of the primary rRNA binding proteins, it binds directly to 16S rRNA where it helps nucleate assembly of the platform of the 30S subunit by binding and bridging several RNA helices of the 16S rRNA. Its function is as follows. Forms an intersubunit bridge (bridge B4) with the 23S rRNA of the 50S subunit in the ribosome. This chain is Small ribosomal subunit protein uS15, found in Yersinia pseudotuberculosis serotype O:1b (strain IP 31758).